We begin with the raw amino-acid sequence, 481 residues long: 4-O-methyl-glucuronoyl methylesterase (481 aa).

The signal sequence occupies residues 1 to 21 (MVSQTVVSSLLVVLGAAGVRA). The CBM1 domain occupies 23–59 (QRQSLWGQCGGSGWSGPTLCVDGAWCNPQNQWYHQCI). Intrachain disulfides connect C108–C143, C292–C428, and C324–C400. Residues 291–296 (GCSRNG) carry the GXSYXG catalytic site motif motif. Residue S293 is the Nucleophile of the active site. 4 residues coordinate substrate: K297, Q339, E347, and W391. The active-site Proton donor/acceptor is the H427.

The protein belongs to the carbohydrate esterase 15 (CE15) family.

It localises to the secreted. The catalysed reaction is a 4-O-methyl-alpha-D-glucuronosyl ester derivative + H2O = 4-O-methyl-alpha-D-glucuronate derivative + an alcohol + H(+). Its function is as follows. Glucuronoyl esterase which may play a significant role in biomass degradation, as it is considered to disconnect hemicellulose from lignin through the hydrolysis of the ester bond between 4-O-methyl-D-glucuronic acid residues of glucuronoxylans and aromatic alcohols of lignin. The polypeptide is 4-O-methyl-glucuronoyl methylesterase (Podospora anserina (strain S / ATCC MYA-4624 / DSM 980 / FGSC 10383) (Pleurage anserina)).